We begin with the raw amino-acid sequence, 286 residues long: ATP synthase gamma chain (286 aa).

Belongs to the ATPase gamma chain family. As to quaternary structure, F-type ATPases have 2 components, CF(1) - the catalytic core - and CF(0) - the membrane proton channel. CF(1) has five subunits: alpha(3), beta(3), gamma(1), delta(1), epsilon(1). CF(0) has three main subunits: a, b and c.

Its subcellular location is the cell inner membrane. Its function is as follows. Produces ATP from ADP in the presence of a proton gradient across the membrane. The gamma chain is believed to be important in regulating ATPase activity and the flow of protons through the CF(0) complex. In Pseudomonas fluorescens (strain SBW25), this protein is ATP synthase gamma chain.